A 998-amino-acid chain; its full sequence is Protein Smaug (998 aa).

The span at 1-37 (MKYATGTDNAMTSGISGQTNNSNSASNEMQPTTSTPT) shows a compositional bias: polar residues. Disordered regions lie at residues 1-45 (MKYA…EATS), 50-69 (TATY…QSQP), and 329-370 (LCPA…GSSS). Residues 329 to 338 (LCPASGSRSS) show a composition bias toward low complexity. Phosphoserine occurs at positions 564 and 575. An interaction with cup region spans residues 583–763 (EFKPNYIKFH…KDLKFKLSKM (181 aa)). Residues 600 to 654 (GIGLWLKSLRLHKYIELFKNMTYEEMLLITEDFLQSVGVTKGASHKLALCIDKLK) enclose the SAM domain. Disordered regions lie at residues 773–892 (HVKP…MQQM) and 942–977 (NNGS…QQPK). 2 stretches are compositionally biased toward polar residues: residues 801–822 (KSGS…NFSL) and 854–864 (HQPQYKSSSYP). Phosphoserine is present on Ser971.

This sequence belongs to the SMAUG family. In terms of assembly, interacts with oskar (osk). Binds to the 3'-UTR of nos. Interacts with cup, which in turn recruits eIF4-E, leading to an indirect interaction between smg and eIF4-E that prevents mRNA translation.

The protein resides in the cytoplasm. In terms of biological role, translation regulator that binds to the 3'-UTR of specific mRNAs such as nanos (nos) and prevent their translation. Prevents translation of unlocalized nos in the bulk cytoplasm via the recruitment of cup. The chain is Protein Smaug from Drosophila simulans (Fruit fly).